The primary structure comprises 107 residues: N(4)-acetylcytidine amidohydrolase (107 aa).

The ASCH domain occupies 9 to 105 (TFFEFLTPLI…KLFVIEYELI (97 aa)). The Proton acceptor role is filled by K23. T26 (nucleophile) is an active-site residue. The Proton donor role is filled by E76.

Belongs to the N(4)-acetylcytidine amidohydrolase family.

The enzyme catalyses N(4)-acetylcytidine + H2O = cytidine + acetate + H(+). The catalysed reaction is N(4)-acetyl-2'-deoxycytidine + H2O = 2'-deoxycytidine + acetate + H(+). It catalyses the reaction N(4)-acetylcytosine + H2O = cytosine + acetate + H(+). In terms of biological role, catalyzes the hydrolysis of N(4)-acetylcytidine (ac4C). The sequence is that of N(4)-acetylcytidine amidohydrolase from Vibrio parahaemolyticus serotype O3:K6 (strain RIMD 2210633).